A 337-amino-acid chain; its full sequence is Putative 2-aminoethylphosphonate-binding periplasmic protein (337 aa).

Positions 1-21 are cleaved as a signal peptide; the sequence is MKLSRLALLSVFALASAPSWA.

This sequence belongs to the bacterial solute-binding protein 1 family.

Its subcellular location is the periplasm. In terms of biological role, probably part of the PhnSTUV complex (TC 3.A.1.11.5) involved in 2-aminoethylphosphonate import. This Salmonella paratyphi A (strain ATCC 9150 / SARB42) protein is Putative 2-aminoethylphosphonate-binding periplasmic protein (phnS).